Consider the following 66-residue polypeptide: MISYIVQTLIVCIAIYAYEWKNFRSANNLTKWAFSLLIAGSAFLWIYMRVNPLLPRLGHLFKYIPF.

Residues 32–49 (WAFSLLIAGSAFLWIYMR) form a helical membrane-spanning segment.

It is found in the membrane. This is an uncharacterized protein from Bacillus subtilis (strain 168).